The primary structure comprises 257 residues: Probable amino-acid ABC transporter-binding protein HI_1080 (257 aa).

The N-terminal stretch at 1-23 (MKKLLFTTALLTGAIAFSTFSHA) is a signal peptide.

Belongs to the bacterial solute-binding protein 3 family.

The protein resides in the periplasm. In terms of biological role, probably part of a binding-protein-dependent transport system for an amino acid. The sequence is that of Probable amino-acid ABC transporter-binding protein HI_1080 from Haemophilus influenzae (strain ATCC 51907 / DSM 11121 / KW20 / Rd).